We begin with the raw amino-acid sequence, 333 residues long: 2-oxoglutarate-dependent dioxygenase 21, chloroplastic (333 aa).

The N-terminal 43 residues, 1-43, are a transit peptide targeting the chloroplast; it reads MPAVAGSLYMASQHKGVPPPLPPPPRPLPVINLGRLTMDSASR. Residues 180–281 form the Fe2OG dioxygenase domain; sequence GVQFVALNNY…RISIASIHGL (102 aa). Residues His205, Asp207, and His262 each contribute to the Fe cation site. Residue Arg272 participates in 2-oxoglutarate binding.

It belongs to the iron/ascorbate-dependent oxidoreductase family. Fe(2+) serves as cofactor. It depends on L-ascorbate as a cofactor. As to expression, expressed in roots.

It is found in the plastid. Its subcellular location is the chloroplast. It carries out the reaction melatonin + 2-oxoglutarate + O2 = 2-hydroxymelatonin + succinate + CO2. In terms of biological role, involved in melatonin degradation. Catalyzes the hydroxylation of melatonin to produce 2-hydroxymelatonin. This is 2-oxoglutarate-dependent dioxygenase 21, chloroplastic from Oryza sativa subsp. japonica (Rice).